The primary structure comprises 296 residues: Lipoyl synthase (296 aa).

Residues cysteine 34, cysteine 39, cysteine 45, cysteine 60, cysteine 64, cysteine 67, and serine 276 each coordinate [4Fe-4S] cluster. The Radical SAM core domain maps to 46–265 (WGEGTATFMI…GEVALSMGFK (220 aa)).

This sequence belongs to the radical SAM superfamily. Lipoyl synthase family. [4Fe-4S] cluster is required as a cofactor.

It localises to the cytoplasm. It carries out the reaction [[Fe-S] cluster scaffold protein carrying a second [4Fe-4S](2+) cluster] + N(6)-octanoyl-L-lysyl-[protein] + 2 oxidized [2Fe-2S]-[ferredoxin] + 2 S-adenosyl-L-methionine + 4 H(+) = [[Fe-S] cluster scaffold protein] + N(6)-[(R)-dihydrolipoyl]-L-lysyl-[protein] + 4 Fe(3+) + 2 hydrogen sulfide + 2 5'-deoxyadenosine + 2 L-methionine + 2 reduced [2Fe-2S]-[ferredoxin]. It participates in protein modification; protein lipoylation via endogenous pathway; protein N(6)-(lipoyl)lysine from octanoyl-[acyl-carrier-protein]: step 2/2. Its function is as follows. Catalyzes the radical-mediated insertion of two sulfur atoms into the C-6 and C-8 positions of the octanoyl moiety bound to the lipoyl domains of lipoate-dependent enzymes, thereby converting the octanoylated domains into lipoylated derivatives. The protein is Lipoyl synthase of Pyrobaculum arsenaticum (strain DSM 13514 / JCM 11321 / PZ6).